Here is an 848-residue protein sequence, read N- to C-terminus: DNA mismatch repair protein MutS (848 aa).

Residue 605 to 612 participates in ATP binding; sequence GPNMAGKS.

Belongs to the DNA mismatch repair MutS family.

This protein is involved in the repair of mismatches in DNA. It is possible that it carries out the mismatch recognition step. This protein has a weak ATPase activity. This chain is DNA mismatch repair protein MutS, found in Leptospira interrogans serogroup Icterohaemorrhagiae serovar copenhageni (strain Fiocruz L1-130).